Here is a 416-residue protein sequence, read N- to C-terminus: Enterobactin exporter EntS (416 aa).

Topologically, residues 1-21 (MNKQSWLLNLSLLKTHPAFRA) are cytoplasmic. A helical membrane pass occupies residues 22 to 42 (VFLARFISIVSLGLLGVAVPV). The Periplasmic segment spans residues 43 to 55 (QIQMMTHSTWLVG). Residues 56 to 76 (LSVTLTGGAMFVGLMVGGVLA) traverse the membrane as a helical segment. Topologically, residues 77–83 (DRYERKK) are cytoplasmic. A helical transmembrane segment spans residues 84–104 (VILLARGTCGIGFIGLCLNAL). Topologically, residues 105–109 (LPEPS) are periplasmic. Residues 110–130 (LLAIYLLGLWDGFFASLGVTA) traverse the membrane as a helical segment. The Cytoplasmic segment spans residues 131–156 (LLAATPALVGRENLMQAGAITMLTVR). Residues 157-177 (LGSVISPMIGGLLLATGGVAW) traverse the membrane as a helical segment. Residue asparagine 178 is a topological domain, periplasmic. A helical transmembrane segment spans residues 179 to 199 (YGLAAAGTFITLLPLLSLPAL). The Cytoplasmic portion of the chain corresponds to 200–218 (PPPPQPREHPLKSLLAGFR). Residues 219-239 (FLLASPLVGGIALLGGLLTMA) traverse the membrane as a helical segment. Over 240–256 (SAVRVLYPALADNWQMS) the chain is Periplasmic. Residues 257–277 (AAEIGFLYAAIPLGAAIGALT) traverse the membrane as a helical segment. At 278 to 287 (SGKLAHSARP) the chain is on the cytoplasmic side. Residues 288–307 (GLLMLLSTLGSFLAIGLFGL) form a helical membrane-spanning segment. At 308-313 (MPMWIL) the chain is on the periplasmic side. A helical membrane pass occupies residues 314-336 (GVVCLALFGWLSAVSSLLQYTML). Residues 337 to 356 (QTQTPEAMLGRINGLWTAQN) are Cytoplasmic-facing. A helical transmembrane segment spans residues 357 to 377 (VTGDAIGAALLGGLGAMMTPV). Alanine 378 is a topological domain (periplasmic). The chain crosses the membrane as a helical span at residues 379–399 (SASASGFGLLIIGVLLLLVLV). Over 400–416 (ELRRFRQTPPQVTASDS) the chain is Cytoplasmic.

This sequence belongs to the major facilitator superfamily. EntS (TC 2.A.1.38) family.

The protein resides in the cell inner membrane. Component of an export pathway for enterobactin. The sequence is that of Enterobactin exporter EntS from Shigella boydii serotype 4 (strain Sb227).